A 322-amino-acid chain; its full sequence is 6-deoxy-6-sulfo-D-fructose transketolase subunit SqwH (322 aa).

The protein belongs to the transketolase family. In terms of assembly, forms a complex with SqwG. Thiamine diphosphate is required as a cofactor.

It carries out the reaction 6-deoxy-6-sulfo-D-fructose + D-glyceraldehyde 3-phosphate = 4-deoxy-4-sulfo-D-erythrose + D-xylulose 5-phosphate. It catalyses the reaction 4-deoxy-4-sulfo-D-erythrulose + D-glyceraldehyde 3-phosphate = sulfoacetaldehyde + D-xylulose 5-phosphate. Its function is as follows. Part of the sulfo-TK pathway, a D-sulfoquinovose degradation pathway that produces 2-hydroxyethane-1-sulfonate (isethionate). Catalyzes two steps of the pathway: the formation of 4-deoxy-4-sulfoerythrose (SE) and xylulose 5-phosphate from 6-deoxy-6-sulfo-D-fructose (SF) and glyceraldehyde 3-phosphate, and the formation of sulfoacetaldehyde (SA) and xylulose 5-phosphate from 4-deoxy-4-sulfo-D-erythrulose (SEu) and glyceraldehyde 3-phosphate. This chain is 6-deoxy-6-sulfo-D-fructose transketolase subunit SqwH, found in Clostridium sp. (strain MSTE9).